Here is a 68-residue protein sequence, read N- to C-terminus: Stage III sporulation protein AC (68 aa).

2 helical membrane-spanning segments follow: residues 5–25 and 33–53; these read VNVI…HTIL and YAQW…ATIV.

Its subcellular location is the cell membrane. This is Stage III sporulation protein AC (spoIIIAC) from Bacillus subtilis (strain 168).